Consider the following 674-residue polypeptide: Polyunsaturated fatty acid 5-lipoxygenase (674 aa).

The 117-residue stretch at P2–K118 folds into the PLAT domain. Positions 17, 18, 19, 44, 45, 47, 79, and 80 each coordinate Ca(2+). In terms of domain architecture, Lipoxygenase spans L119–I674. Position 272 is a phosphoserine (S272). Fe cation contacts are provided by H368 and H373. S524 bears the Phosphoserine mark. Residues H551, N555, and I674 each coordinate Fe cation.

The protein belongs to the lipoxygenase family. As to quaternary structure, homodimer. Interacts with ALOX5AP and LTC4S. Interacts with COTL1, the interaction is required for stability and efficient catalytic activity. Interacts with PIK3R1; this interaction bridges ALOX5 with CD40 after CD40 ligation in B cells and leads to the production of reactive oxygen species (ROS). Interacts (via PLAT domain) with DICER1 (via Dicer dsRNA-binding fold domain); this interaction enhances arachidonate 5-lipoxygenase activity and modifies the miRNA precursor processing activity of DICER1. Fe cation is required as a cofactor. Serine phosphorylation by MAPKAPK2 is stimulated by arachidonic acid. Phosphorylation on Ser-524 by PKA has an inhibitory effect. Phosphorylation on Ser-272 prevents export from the nucleus. Phosphorylation at Ser-524 is stimulated by 8-bromo-3',5'-cyclic AMP or prostaglandin E2. As to expression, expressed in skin Langerhans cells and their emigrated counterparts in draining lymph nodes. Highly expressed in circulating leukocytes.

The protein localises to the cytoplasm. Its subcellular location is the nucleus matrix. The protein resides in the nucleus membrane. It is found in the perinuclear region. It localises to the cytosol. The protein localises to the nucleus envelope. Its subcellular location is the nucleus intermembrane space. It catalyses the reaction (5Z,8Z,11Z,14Z)-eicosatetraenoate + O2 = (5S)-hydroperoxy-(6E,8Z,11Z,14Z)-eicosatetraenoate. The catalysed reaction is (5Z,8Z,11Z,14Z)-eicosatetraenoate + O2 = leukotriene A4 + H2O. It carries out the reaction (5Z,8Z,11Z,14Z)-eicosatetraenoate + O2 = (8S)-hydroperoxy-(5Z,9E,11Z,14Z)-eicosatetraenoate. The enzyme catalyses (5Z,8Z,11Z,14Z)-eicosatetraenoate + O2 = (12S)-hydroperoxy-(5Z,8Z,10E,14Z)-eicosatetraenoate. It catalyses the reaction 18-HEPE + O2 = (5S)-hydroperoxy-18-hydroxy-(7E,9E,11Z,14Z,16E)-eicosapentaenoate. The catalysed reaction is (18R)-hydroxy-(5Z,8Z,11Z,14Z,16E)-eicosapentaenoate + O2 = (5S)-hydroperoxy-(18R)-hydroxy-(6E,8Z,11Z,14Z,16E)-eicosapentaenoate. It carries out the reaction (18S)-hydroxy-(5Z,8Z,11Z,14Z,16E)-eicosapentaenoate + O2 = (5S)-hydroperoxy-(18S)-hydroxy-(6E,8Z,11Z,14Z,16E)-eicosapentaenoate. The enzyme catalyses (5S)-hydroperoxy-(18S)-hydroxy-(6E,8Z,11Z,14Z,16E)-eicosapentaenoate = (5S,6S)-epoxy-(18S)-hydroxy-(7E,9E,11Z,14Z,16E)-eicosapentaenoate + H2O. It catalyses the reaction (5S)-hydroperoxy-(18R)-hydroxy-(6E,8Z,11Z,14Z,16E)-eicosapentaenoate = (5S,6S)-epoxy-(18R)-hydroxy-(7E,9E,11Z,14Z,16E)-eicosapentaenoate + H2O. The catalysed reaction is (5S)-hydroperoxy-18-hydroxy-(7E,9E,11Z,14Z,16E)-eicosapentaenoate = (5S,6S)-epoxy-18-hydroxy-(7E,9E,11Z,14Z,16E)-eicosapentaenoate + H2O. It carries out the reaction (15S)-hydroxy-(5Z,8Z,11Z,13E)-eicosatetraenoate + O2 = (5S)-hydroperoxy-(15S)-hydroxy-(6E,8Z,11Z,13E)-eicosatetraenoate. The enzyme catalyses (5S)-hydroperoxy-(6E,8Z,11Z,14Z)-eicosatetraenoate = leukotriene A4 + H2O. It catalyses the reaction (5Z,8Z)-eicosadienoate + O2 = (5S)-hydroperoxy-(6E,8Z)-eicosadienoate. The catalysed reaction is (12S)-hydroxy-(5Z,8Z,10E,14Z)-eicosatetraenoate + O2 = (5S)-hydroperoxy-(12S)-hydroxy-(6E,8Z,10E,14Z)-eicosatetraenoate. It carries out the reaction (5Z,8Z,11Z,14Z,17Z)-eicosapentaenoate + O2 = 5-hydroperoxy-(6E,8Z,11Z,14Z,17Z)-eicosapentaenoate. The enzyme catalyses (4Z,7Z,10Z,13Z,16Z,19Z)-docosahexaenoate + O2 = (14S)-hydroperoxy-(4Z,7Z,10Z,12E,16Z,19Z)-docosahexaenoate. It catalyses the reaction (4Z,7Z,10Z,13Z,16Z,19Z)-docosahexaenoate + O2 = (7S)-hydroperoxy-(4Z,8E,10Z,13Z,16Z,19Z)-docosahexaenoate. The catalysed reaction is (4Z,7Z,10Z,13Z,16Z,19Z)-docosahexaenoate + O2 = (17S)-hydroperoxy-(4Z,7Z,10Z,13Z,15E,19Z)-docosahexaenoate. Its pathway is lipid metabolism; leukotriene A4 biosynthesis. Catalyzes the oxygenation of arachidonate to 5-hydroperoxyeicosatetraenoate (5-HPETE) followed by the dehydration to 5,6- epoxyeicosatetraenoate (Leukotriene A4/LTA4), the first two steps in the biosynthesis of leukotrienes, which are potent mediators of inflammation. Also catalyzes the oxygenation of arachidonic acid into 8-hydroperoxyicosatetraenoic acid (8-HPETE) and 12-hydroperoxyicosatetraenoic acid (12-HPETE). Displays lipoxin synthase activity being able to convert (15S)-HETE into a conjugate tetraene. Although arachidonate is the preferred substrate, this enzyme can also metabolize oxidized fatty acids derived from arachidonate such as (15S)-HETE, eicosapentaenoate (EPA) such as (18R)- and (18S)-HEPE or docosahexaenoate (DHA) which lead to the formation of specialized pro-resolving mediators (SPM) lipoxin and resolvins E and D respectively, therefore it participates in anti-inflammatory responses. Oxidation of DHA directly inhibits endothelial cell proliferation and sprouting angiogenesis via peroxisome proliferator-activated receptor gamma (PPARgamma). It does not catalyze the oxygenation of linoleic acid and does not convert (5S)-HETE to lipoxin isomers. In addition to inflammatory processes, participates in dendritic cell migration, wound healing through an antioxidant mechanism based on heme oxygenase-1 (HO-1) regulation expression, monocyte adhesion to the endothelium via ITGAM expression on monocytes. Moreover, it helps establish an adaptive humoral immunity by regulating primary resting B cells and follicular helper T cells and participates in the CD40-induced production of reactive oxygen species (ROS) after CD40 ligation in B cells through interaction with PIK3R1 that bridges ALOX5 with CD40. May also play a role in glucose homeostasis, regulation of insulin secretion and palmitic acid-induced insulin resistance via AMPK. Can regulate bone mineralization and fat cell differentiation increases in induced pluripotent stem cells. This Mus musculus (Mouse) protein is Polyunsaturated fatty acid 5-lipoxygenase.